Consider the following 398-residue polypeptide: Gastric triacylglycerol lipase (398 aa).

The first 19 residues, 1–19 (MWLLLTMASLISVLGTTHG), serve as a signal peptide directing secretion. N-linked (GlcNAc...) asparagine glycosylation is found at N34 and N99. One can recognise an AB hydrolase-1 domain in the interval 78-377 (PVVFLQHGLL…PFYNHLDFIW (300 aa)). S172 acts as the Nucleophile in catalysis. C246 and C255 are oxidised to a cystine. N271 and N327 each carry an N-linked (GlcNAc...) asparagine glycan. Active-site charge relay system residues include D343 and H372.

It belongs to the AB hydrolase superfamily. Lipase family.

The protein localises to the secreted. The enzyme catalyses a triacylglycerol + H2O = a diacylglycerol + a fatty acid + H(+). The catalysed reaction is 1,2,3-tri-(9Z-octadecenoyl)-glycerol + H2O = 1,2-di-(9Z-octadecenoyl)-sn-glycerol + (9Z)-octadecenoate + H(+). It carries out the reaction 1,2,3-trioctanoylglycerol + H2O = 1,2-dioctanoyl-sn-glycerol + octanoate + H(+). Functionally, catalyzes the hydrolysis of triacylglycerols to yield free fatty acids, diacylglycerol, monoacylglycerol, and glycerol. Shows a preferential hydrolysis at the sn-3 position of triacylglycerol. The polypeptide is Gastric triacylglycerol lipase (LIPF) (Homo sapiens (Human)).